Consider the following 217-residue polypeptide: Protein-L-isoaspartate O-methyltransferase (217 aa).

Ser64 is a catalytic residue.

Belongs to the methyltransferase superfamily. L-isoaspartyl/D-aspartyl protein methyltransferase family.

Its subcellular location is the cytoplasm. It catalyses the reaction [protein]-L-isoaspartate + S-adenosyl-L-methionine = [protein]-L-isoaspartate alpha-methyl ester + S-adenosyl-L-homocysteine. Its function is as follows. Catalyzes the methyl esterification of L-isoaspartyl residues in peptides and proteins that result from spontaneous decomposition of normal L-aspartyl and L-asparaginyl residues. It plays a role in the repair and/or degradation of damaged proteins. The protein is Protein-L-isoaspartate O-methyltransferase of Nitrobacter winogradskyi (strain ATCC 25391 / DSM 10237 / CIP 104748 / NCIMB 11846 / Nb-255).